Consider the following 378-residue polypeptide: MQLPSFLEVYEGLISTSSISSTDPSWDQGNAKVIEKLASWFKDLGFSVEVIEVEPGKHNMIARMGEGEGGLLLAGHSDTVPFDEGRWSFDPHKLTEKDNRFYGLGTADMKGFFAFIYEAVKKIDWSKQTKPLYVLATCDEETTMLGARHFTENAPFKPDYCIIGEPTSLVPIRGHKGHVANAIRVTGKSGHSSDPALGVNAIEIMHEVMFAMMQLRDKLVKEYHHPGFAIPSPTLNLGHIHGGDSANRICGCCELHYDVRPLPGISLDGLENMLRGALKEVEAKWPGRLEIIPLHDPIPGYECQHDHPFIGGVEEICQTSSETVNYCTEAPFLQQLCPTLVLGPGSIDQAHQPDEFLSFDFIDPTIDVLSRAMVKYCC.

H76 contacts Zn(2+). The active site involves D78. D108 is a binding site for Zn(2+). The active site involves E140. 3 residues coordinate Zn(2+): E141, E165, and H351.

The protein belongs to the peptidase M20A family. ArgE subfamily. In terms of assembly, homodimer. It depends on Zn(2+) as a cofactor. Requires Co(2+) as cofactor. Glutathione is required as a cofactor.

Its subcellular location is the cytoplasm. It carries out the reaction N(2)-acetyl-L-ornithine + H2O = L-ornithine + acetate. It participates in amino-acid biosynthesis; L-arginine biosynthesis; L-ornithine from N(2)-acetyl-L-ornithine (linear): step 1/1. In terms of biological role, catalyzes the hydrolysis of the amide bond of N(2)-acetylated L-amino acids. Cleaves the acetyl group from N-acetyl-L-ornithine to form L-ornithine, an intermediate in L-arginine biosynthesis pathway, and a branchpoint in the synthesis of polyamines. In Vibrio campbellii (strain ATCC BAA-1116), this protein is Acetylornithine deacetylase.